The sequence spans 285 residues: ATP synthase gamma chain (285 aa).

It belongs to the ATPase gamma chain family. F-type ATPases have 2 components, CF(1) - the catalytic core - and CF(0) - the membrane proton channel. CF(1) has five subunits: alpha(3), beta(3), gamma(1), delta(1), epsilon(1). CF(0) has three main subunits: a, b and c.

The protein localises to the cell membrane. In terms of biological role, produces ATP from ADP in the presence of a proton gradient across the membrane. The gamma chain is believed to be important in regulating ATPase activity and the flow of protons through the CF(0) complex. This Dehalococcoides mccartyi (strain ATCC BAA-2266 / KCTC 15142 / 195) (Dehalococcoides ethenogenes (strain 195)) protein is ATP synthase gamma chain.